A 153-amino-acid polypeptide reads, in one-letter code: Ribosome maturation factor RimP (153 aa).

It belongs to the RimP family.

It localises to the cytoplasm. Its function is as follows. Required for maturation of 30S ribosomal subunits. This chain is Ribosome maturation factor RimP, found in Clostridioides difficile (strain 630) (Peptoclostridium difficile).